Here is a 420-residue protein sequence, read N- to C-terminus: Transmembrane protease serine 11B-like protein (420 aa).

The Cytoplasmic segment spans residues 1–19; sequence MTVSKLRPVIASRKSFPPW. A helical; Signal-anchor for type II membrane protein transmembrane segment spans residues 20-40; sequence MIILGVLGVLAILGLIIGLLV. Topologically, residues 41–420 are extracellular; the sequence is HFLAVENKIY…RDWIASKTGI (380 aa). The SEA domain maps to 48-165; that stretch reads KIYYYQGSFK…GSLKLTEITK (118 aa). Asn111 and Asn146 each carry an N-linked (GlcNAc...) asparagine glycan. One can recognise a Peptidase S1 domain in the interval 189–419; the sequence is ITGGSTAQKG…YRDWIASKTG (231 aa). Residues Cys214 and Cys230 are joined by a disulfide bond. Residue His229 is the Charge relay system of the active site. N-linked (GlcNAc...) asparagine glycosylation occurs at Asn239. Catalysis depends on Asp274, which acts as the Charge relay system. Intrachain disulfides connect Cys339-Cys355 and Cys366-Cys395. Ser370 acts as the Charge relay system in catalysis.

Belongs to the peptidase S1 family.

The protein localises to the membrane. It localises to the cell membrane. With respect to regulation, inhibited by aprotinin, leupeptin, benzamidine, SERPINA1, SPINT1 and SPINT2. Serine protease. This chain is Transmembrane protease serine 11B-like protein (Tmprss11bnl), found in Rattus norvegicus (Rat).